Consider the following 347-residue polypeptide: Quinolinate synthase (347 aa).

Iminosuccinate contacts are provided by His-47 and Ser-68. Cys-113 provides a ligand contact to [4Fe-4S] cluster. Iminosuccinate contacts are provided by residues 139–141 and Ser-156; that span reads YAN. Residue Cys-200 coordinates [4Fe-4S] cluster. Iminosuccinate contacts are provided by residues 226–228 and Thr-243; that span reads HPE. Cys-297 is a binding site for [4Fe-4S] cluster.

It belongs to the quinolinate synthase family. Type 1 subfamily. [4Fe-4S] cluster serves as cofactor.

The protein localises to the cytoplasm. The catalysed reaction is iminosuccinate + dihydroxyacetone phosphate = quinolinate + phosphate + 2 H2O + H(+). The protein operates within cofactor biosynthesis; NAD(+) biosynthesis; quinolinate from iminoaspartate: step 1/1. In terms of biological role, catalyzes the condensation of iminoaspartate with dihydroxyacetone phosphate to form quinolinate. This is Quinolinate synthase from Escherichia coli O45:K1 (strain S88 / ExPEC).